Consider the following 644-residue polypeptide: Macrolide export ATP-binding/permease protein MacB (644 aa).

In terms of domain architecture, ABC transporter spans Ile4–Ala242. An ATP-binding site is contributed by Gly40–Ser47. The next 4 helical transmembrane spans lie at Leu270–Gly290, Ile524–Val544, Leu574–Phe594, and Ala607–Met627.

It belongs to the ABC transporter superfamily. Macrolide exporter (TC 3.A.1.122) family. Homodimer.

The protein resides in the cell inner membrane. Functionally, non-canonical ABC transporter that contains transmembrane domains (TMD), which form a pore in the inner membrane, and an ATP-binding domain (NBD), which is responsible for energy generation. Confers resistance against macrolides. This Neisseria meningitidis serogroup A / serotype 4A (strain DSM 15465 / Z2491) protein is Macrolide export ATP-binding/permease protein MacB.